The chain runs to 212 residues: MGQKVHPFGFRLGYNKNWQSRWYSKKEYPAFVFEDHNIRKFVKKTLYHAGLAKIEIERAGGKVRLILSTARPGIVIGRKGVEIEKLRADLRKKFKREFAIEVNEIRRPEVESQLVAENIALQLERRVAFRRAMKRTVSMARKFGAEGIKVTCSGRLAGAEIARTEWYRDGRVPLQTLRADIDFGFAEARTTYGVIGVKVWIFKGELLDNEVA.

A KH type-2 domain is found at 38 to 106 (IRKFVKKTLY…EFAIEVNEIR (69 aa)).

The protein belongs to the universal ribosomal protein uS3 family. As to quaternary structure, part of the 30S ribosomal subunit. Forms a tight complex with proteins S10 and S14.

Its function is as follows. Binds the lower part of the 30S subunit head. Binds mRNA in the 70S ribosome, positioning it for translation. In Nitratidesulfovibrio vulgaris (strain ATCC 29579 / DSM 644 / CCUG 34227 / NCIMB 8303 / VKM B-1760 / Hildenborough) (Desulfovibrio vulgaris), this protein is Small ribosomal subunit protein uS3.